A 254-amino-acid polypeptide reads, in one-letter code: Attacin-A (254 aa).

A signal peptide spans Met1–Ala18. Positions Arg19 to Arg62 are excised as a propeptide.

The protein belongs to the attacin/sarcotoxin-2 family.

The protein localises to the secreted. Functionally, hemolymph antibacterial protein. This Trichoplusia ni (Cabbage looper) protein is Attacin-A.